The following is a 179-amino-acid chain: Acireductone dioxygenase (179 aa).

Residues H97, H99, E103, and H141 each contribute to the Fe(2+) site. The Ni(2+) site is built by H97, H99, E103, and H141.

Belongs to the acireductone dioxygenase (ARD) family. As to quaternary structure, monomer. Fe(2+) is required as a cofactor. Ni(2+) serves as cofactor.

The catalysed reaction is 1,2-dihydroxy-5-(methylsulfanyl)pent-1-en-3-one + O2 = 3-(methylsulfanyl)propanoate + CO + formate + 2 H(+). It catalyses the reaction 1,2-dihydroxy-5-(methylsulfanyl)pent-1-en-3-one + O2 = 4-methylsulfanyl-2-oxobutanoate + formate + 2 H(+). It functions in the pathway amino-acid biosynthesis; L-methionine biosynthesis via salvage pathway; L-methionine from S-methyl-5-thio-alpha-D-ribose 1-phosphate: step 5/6. Catalyzes 2 different reactions between oxygen and the acireductone 1,2-dihydroxy-3-keto-5-methylthiopentene (DHK-MTPene) depending upon the metal bound in the active site. Fe-containing acireductone dioxygenase (Fe-ARD) produces formate and 2-keto-4-methylthiobutyrate (KMTB), the alpha-ketoacid precursor of methionine in the methionine recycle pathway. Ni-containing acireductone dioxygenase (Ni-ARD) produces methylthiopropionate, carbon monoxide and formate, and does not lie on the methionine recycle pathway. In Granulibacter bethesdensis (strain ATCC BAA-1260 / CGDNIH1), this protein is Acireductone dioxygenase.